The primary structure comprises 491 residues: Zinc finger protein 655 (491 aa).

Residues 1-52 are disordered; that stretch reads MEEIPAQEAAGSPRVQFQSLETQSECLSPEPQFVQDTDMEQGLTGDGETREE. Residues 15–26 are compositionally biased toward polar residues; it reads VQFQSLETQSEC. Gln-60 carries the phosphoserine modification. Glycyl lysine isopeptide (Lys-Gly) (interchain with G-Cter in SUMO2) cross-links involve residues Lys-77, Lys-190, and Lys-201. 6 consecutive C2H2-type zinc fingers follow at residues 212 to 234, 240 to 262, 303 to 325, 330 to 353, 380 to 402, and 408 to 430; these read YKCDVCGKIFHQSSALTRHQRIH, YKCKECEKSFSQSSSLSRHKRIH, YKCSSCERVFSRSVHLTQHQKIH, CKCTVCGSDFCHTSYLLEHQRVHH, YTCSECGKDFRLNSHLIQHQRIH, and HECNECGKAFSQTSCLIQHHKMH.

It belongs to the krueppel C2H2-type zinc-finger protein family. Interacts with VAV1 and CDK4. Interacts with INTS13; promoting association with the integrator complex.

It is found in the nucleus. Probable transcription factor. The polypeptide is Zinc finger protein 655 (Homo sapiens (Human)).